The chain runs to 28 residues: trp operon leader peptide (28 aa).

Its function is as follows. This protein is involved in control of the biosynthesis of tryptophan. The protein is trp operon leader peptide (trpL) of Serratia marcescens.